A 349-amino-acid polypeptide reads, in one-letter code: MEEEKYLPELMAEKDSLDPSFVHASRLLAEEIEKFQGSDGKKEDEEKKYLDVISNKNIKLSERVLIPVKQYPKFNFVGKLLGPRGNSLKRLQEETGAKMSILGKGSMRDKAKEEELRKSGEAKYAHLSDELHVLIEVFAPPGEAYSRMSHALEEIKKFLVPDYNDEIRQEQLRELSYLNGSEDSGRGRGIRGRGIRIAPTAPSRGRGGAIPPPPPPGRGVLTPRGSTVTRGALPVPPVARGVPTPRARGAPTVPGYRAPPPPAHEAYEEYGYDDGYGGEYDDQTYETYDNSYATQTQSVPEYYDYGHGVSEDAYDSYAPEEWATTRSSLKAPPQRSARGGYREHPYGRY.

The 71-residue stretch at 65–135 (LIPVKQYPKF…HLSDELHVLI (71 aa)) folds into the KH domain. Disordered regions lie at residues 182–284 (EDSG…DDQT) and 319–349 (PEEW…YGRY). An omega-N-methylarginine mark is found at Arg-230 and Arg-240. A compositionally biased stretch (basic and acidic residues) spans 340 to 349 (GYREHPYGRY).

It belongs to the KHDRBS family. As to quaternary structure, self-associates to form homooligomers. Interacts with KHDRBS1/SAM68; heterooligomer formation of KHDRBS family proteins may modulate RNA substrate specificity. Interacts with RBMX. Interacts with SAFB, SFRS9 and YTHDC1. Interacts with FYN and PLCG1 (via SH3 domain). Interacts (phosphorylated) with FYN, GRB2, PLCG1 and RASA1 (via SH2 domain). Post-translationally, methylated. In terms of processing, tyrosine phosphorylated by FYN, PTK6 and SRC. Tyrosine phosphorylated by SRC during mitosis. In terms of tissue distribution, highly expressed in brain, lung, kidney and small intestine. Weakly expressed in placenta, liver, spleen, thymus, ovary and colon.

The protein resides in the nucleus. In terms of biological role, RNA-binding protein that plays a role in the regulation of alternative splicing and influences mRNA splice site selection and exon inclusion. Binds both poly(A) and poly(U) homopolymers. Phosphorylation by PTK6 inhibits its RNA-binding ability. Induces an increased concentration-dependent incorporation of exon in CD44 pre-mRNA by direct binding to purine-rich exonic enhancer. Can regulate alternative splicing of NRXN1 in the laminin G-like domain 6 containing the evolutionary conserved neurexin alternative spliced segment 4 (AS4) involved in neurexin selective targeting to postsynaptic partners. Regulates cell-type specific alternative splicing of NRXN1 at AS4 and acts synergystically with SAM68 in exon skipping. In contrast acts antagonistically with SAM68 in NRXN3 exon skipping at AS4. Its phosphorylation by FYN inhibits its ability to regulate splice site selection. May function as an adapter protein for Src kinases during mitosis. The protein is KH domain-containing, RNA-binding, signal transduction-associated protein 2 (KHDRBS2) of Homo sapiens (Human).